The chain runs to 157 residues: Large ribosomal subunit protein bL20 (157 aa).

The interval 121 to 157 is disordered; it reads TSAPAVSAEAAPKAKAAKKPAAKKAAAKKPVAEEAAK. Residues 122 to 134 are compositionally biased toward low complexity; sequence SAPAVSAEAAPKA. Basic residues predominate over residues 135-147; the sequence is KAAKKPAAKKAAA.

This sequence belongs to the bacterial ribosomal protein bL20 family.

In terms of biological role, binds directly to 23S ribosomal RNA and is necessary for the in vitro assembly process of the 50S ribosomal subunit. It is not involved in the protein synthesizing functions of that subunit. This is Large ribosomal subunit protein bL20 (rplT) from Arthrobacter sp. (strain FB24).